The chain runs to 206 residues: MKMKSIYFIAGLLLMIVQGSWQNPLQDTEEKSRSFKASQSEPLDESRQLNEVKRHSQGTFTSDYSKYLDSRRAQDFVQWLMSTKRNGQQGQEDKENDKFPDQLSSNAISKRHSEFERHAEGTYTSDITSYLEGQAAKEFIAWLVNGRGRRDFPEKALMAEEMGRRHADGTFTSDINKILDDMAAKEFLKWLINTKVTQRDLLGEYQ.

The first 22 residues, 1 to 22, serve as a signal peptide directing secretion; it reads MKMKSIYFIAGLLLMIVQGSWQ. Positions 27-57 are disordered; the sequence is DTEEKSRSFKASQSEPLDESRQLNEVKRHSQ. Over residues 44–54 the composition is skewed to basic and acidic residues; sequence DESRQLNEVKR. Residues 86–109 constitute a propeptide that is removed on maturation; that stretch reads NGQQGQEDKENDKFPDQLSSNAIS. The residue at position 147 (Arg-147) is an Arginine amide. 2 consecutive propeptides follow at residues 151–163 and 199–206; these read DFPEKALMAEEMG and RDLLGEYQ.

It belongs to the glucagon family. In terms of processing, proglucagon is post-translationally processed in a tissue-specific manner in pancreatic A cells and intestinal L cells. In pancreatic A cells, the major bioactive hormone is glucagon cleaved by PCSK2/PC2. In the intestinal L cells PCSK1/PC1 liberates GLP-1 and GLP-2. GLP-1 is further N-terminally truncated by post-translational processing in the intestinal L cells resulting in GLP-1(7-37) GLP-1-(7-36)amide.

The protein localises to the secreted. Plays a key role in glucose metabolism and homeostasis. Regulates blood glucose by increasing gluconeogenesis and decreasing glycolysis. Its function is as follows. Potent stimulator of glucose-dependent insulin release. Plays important roles on gastric motility and the suppression of plasma glucagon levels. May be involved in the suppression of satiety and stimulation of glucose disposal in peripheral tissues, independent of the actions of insulin. Has growth-promoting activities on intestinal epithelium. May also regulate the hypothalamic pituitary axis (HPA) via effects on LH, TSH, CRH, oxytocin, and vasopressin secretion. Increases islet mass through stimulation of islet neogenesis and pancreatic beta cell proliferation. In terms of biological role, stimulates intestinal growth and up-regulates villus height in the small intestine, concomitant with increased crypt cell proliferation and decreased enterocyte apoptosis. The gastrointestinal tract, from the stomach to the colon is the principal target for GLP-2 action. Plays a key role in nutrient homeostasis, enhancing nutrient assimilation through enhanced gastrointestinal function, as well as increasing nutrient disposal. Stimulates intestinal glucose transport and decreases mucosal permeability. This is Pro-glucagon (GCG) from Gallus gallus (Chicken).